A 31-amino-acid chain; its full sequence is Cycloviolacin-O23 (31 aa).

Positions 1 to 31 form a cross-link, cyclopeptide (Gly-Asn); that stretch reads GLPTCGETCFGGTCNTPGCTCDSSWPICTHN. Cystine bridges form between C5/C19, C9/C21, and C14/C28.

Post-translationally, this is a cyclic peptide. As to expression, expressed in leaves but not in petals, petioles, roots and runners (at protein level).

Functionally, probably participates in a plant defense mechanism. This Viola odorata (Sweet violet) protein is Cycloviolacin-O23.